Consider the following 108-residue polypeptide: Evasin P1127 (108 aa).

Positions 1–28 (MEAKTFAFLEIAMFIALGIQTFVAVTDA) are cleaved as a signal peptide. Disulfide bonds link Cys41–Cys63, Cys45–Cys65, and Cys56–Cys76. Asn44 is a glycosylation site (N-linked (GlcNAc...) asparagine). An N-linked (GlcNAc...) asparagine glycan is attached at Asn89.

It is found in the secreted. Functionally, salivary chemokine-binding protein which binds to host chemokines CXCL1, CXCL2, CXCL3, CXCL5 and CXCL8. The polypeptide is Evasin P1127 (Ixodes ricinus (Common tick)).